Reading from the N-terminus, the 736-residue chain is Protein DSF2 (736 aa).

Over residues 1–10 the composition is skewed to polar residues; it reads MNQNLKNTSW. Disordered regions lie at residues 1–46, 178–208, 229–410, and 440–461; these read MNQN…DSQF, SGMK…SPNP, ISDN…SGEN, and FKTA…ARPN. Positions 14–24 are enriched in basic and acidic residues; the sequence is IGSDDQERKAN. Polar residues-rich tracts occupy residues 25–46 and 197–208; these read SSEV…DSQF and ENGNRSTNSPNP. Low complexity predominate over residues 238–256; that stretch reads NNANSKNNRTTSNNINTST. The segment covering 264–284 has biased composition (polar residues); it reads KQSCPNEFTTTQKSNCLYRNG. Composition is skewed to low complexity over residues 285-294, 303-318, and 335-350; these read SSTSTNTSFS, KTQS…FSKL, and SNSS…TMTN. Residues 374–385 are compositionally biased toward basic residues; sequence KLFKSPRTRAKN. The segment covering 392–410 has biased composition (polar residues); it reads EGSSPIRSATNSLDFSGEN.

The sequence is that of Protein DSF2 (DSF2) from Saccharomyces cerevisiae (strain ATCC 204508 / S288c) (Baker's yeast).